A 298-amino-acid polypeptide reads, in one-letter code: Probable endonuclease 4 (298 aa).

Residues H70, H111, E146, D180, H183, H215, D228, H230, and E260 each contribute to the Zn(2+) site.

It belongs to the AP endonuclease 2 family. It depends on Zn(2+) as a cofactor.

The catalysed reaction is Endonucleolytic cleavage to 5'-phosphooligonucleotide end-products.. In terms of biological role, endonuclease IV plays a role in DNA repair. It cleaves phosphodiester bonds at apurinic or apyrimidinic (AP) sites, generating a 3'-hydroxyl group and a 5'-terminal sugar phosphate. The chain is Probable endonuclease 4 from Halalkalibacterium halodurans (strain ATCC BAA-125 / DSM 18197 / FERM 7344 / JCM 9153 / C-125) (Bacillus halodurans).